The following is a 123-amino-acid chain: Small ribosomal subunit protein uS12 (123 aa).

At Asp89 the chain carries 3-methylthioaspartic acid.

Belongs to the universal ribosomal protein uS12 family. As to quaternary structure, part of the 30S ribosomal subunit. Contacts proteins S8 and S17. May interact with IF1 in the 30S initiation complex.

Functionally, with S4 and S5 plays an important role in translational accuracy. Interacts with and stabilizes bases of the 16S rRNA that are involved in tRNA selection in the A site and with the mRNA backbone. Located at the interface of the 30S and 50S subunits, it traverses the body of the 30S subunit contacting proteins on the other side and probably holding the rRNA structure together. The combined cluster of proteins S8, S12 and S17 appears to hold together the shoulder and platform of the 30S subunit. This chain is Small ribosomal subunit protein uS12, found in Phenylobacterium zucineum (strain HLK1).